The chain runs to 336 residues: Holliday junction branch migration complex subunit RuvB (336 aa).

Residues 4 to 184 are large ATPase domain (RuvB-L); the sequence is ADRLISAASN…FGIVQRLEFY (181 aa). Residues I23, R24, G65, K68, T69, T70, 131–133, R174, Y184, and R221 contribute to the ATP site; that span reads EDY. T69 contacts Mg(2+). A small ATPAse domain (RuvB-S) region spans residues 185–255; the sequence is QVPDLQYIVG…VAAQALDMLN (71 aa). The interval 258 to 336 is head domain (RuvB-H); sequence AEGFDYMDRK…HFGITPPEMP (79 aa). DNA contacts are provided by R294, R313, and R318.

Belongs to the RuvB family. In terms of assembly, homohexamer. Forms an RuvA(8)-RuvB(12)-Holliday junction (HJ) complex. HJ DNA is sandwiched between 2 RuvA tetramers; dsDNA enters through RuvA and exits via RuvB. An RuvB hexamer assembles on each DNA strand where it exits the tetramer. Each RuvB hexamer is contacted by two RuvA subunits (via domain III) on 2 adjacent RuvB subunits; this complex drives branch migration. In the full resolvosome a probable DNA-RuvA(4)-RuvB(12)-RuvC(2) complex forms which resolves the HJ.

It is found in the cytoplasm. It carries out the reaction ATP + H2O = ADP + phosphate + H(+). In terms of biological role, the RuvA-RuvB-RuvC complex processes Holliday junction (HJ) DNA during genetic recombination and DNA repair, while the RuvA-RuvB complex plays an important role in the rescue of blocked DNA replication forks via replication fork reversal (RFR). RuvA specifically binds to HJ cruciform DNA, conferring on it an open structure. The RuvB hexamer acts as an ATP-dependent pump, pulling dsDNA into and through the RuvAB complex. RuvB forms 2 homohexamers on either side of HJ DNA bound by 1 or 2 RuvA tetramers; 4 subunits per hexamer contact DNA at a time. Coordinated motions by a converter formed by DNA-disengaged RuvB subunits stimulates ATP hydrolysis and nucleotide exchange. Immobilization of the converter enables RuvB to convert the ATP-contained energy into a lever motion, pulling 2 nucleotides of DNA out of the RuvA tetramer per ATP hydrolyzed, thus driving DNA branch migration. The RuvB motors rotate together with the DNA substrate, which together with the progressing nucleotide cycle form the mechanistic basis for DNA recombination by continuous HJ branch migration. Branch migration allows RuvC to scan DNA until it finds its consensus sequence, where it cleaves and resolves cruciform DNA. This Enterobacter sp. (strain 638) protein is Holliday junction branch migration complex subunit RuvB.